Consider the following 154-residue polypeptide: L-alanine exporter AlaE (154 aa).

4 consecutive transmembrane segments (helical) span residues 21 to 41 (FAMV…LSGM), 51 to 71 (LVAI…RDFF), 90 to 110 (ILAY…VIGA), and 115 to 135 (IVAA…VYGY).

The protein belongs to the AlaE exporter family.

The protein resides in the cell inner membrane. Exports L-alanine. The chain is L-alanine exporter AlaE from Escherichia fergusonii (strain ATCC 35469 / DSM 13698 / CCUG 18766 / IAM 14443 / JCM 21226 / LMG 7866 / NBRC 102419 / NCTC 12128 / CDC 0568-73).